We begin with the raw amino-acid sequence, 934 residues long: Intimin (934 aa).

The signal sequence occupies residues 1 to 39 (MITHGCYTRTRHKHKLKKTLIMLSAGLGLFFYVNQNSFA). The tract at residues 40 to 153 (NGENYFKLGS…KLTKMSPDVT (114 aa)) is peptidoglycan-binding. The sufficient for homodimerization stretch occupies residues 40-153 (NGENYFKLGS…KLTKMSPDVT (114 aa)). Residues 40 to 212 (NGENYFKLGS…LQAWLQHYGT (173 aa)) form a required for periplasmic localization region. The region spanning 63–112 (LFYTLKTGETVADLSKSQDINLSTIWSLNKHLYSSESEMMKAAPGQQIIL) is the LysM domain. Positions 210 to 411 (YGTAEVNLQS…LYSMQFRYQF (202 aa)) are inverse autotransporter. The tract at residues 402-411 (LYSMQFRYQF) is signature sequence for beta-barrel assembly machinery (BAM), which recognizes the unfolded beta-barrel in the periplasm. The minimum linker residues necessary for formation of a heat-modifiable beta-barrel stretch occupies residues 437–449 (LVQRNNNIILEYK). 2 Big-1 domains span residues 560-653 (VTDF…VIFF) and 660-753 (ITEI…VTFF). The tract at residues 747 to 934 (ATEVTFFDEL…TPNVYAVCVE (188 aa)) is intimin receptor Tir-binding. The BIG2 domain occupies 787–833 (ASGGDGTYSWYSENTSIATVDASGKVTLNGKGSVVIKATSGDKQTVS). C858 and C932 are oxidised to a cystine.

The protein belongs to the intimin/invasin family. In terms of assembly, homodimer. Interacts with Tir.

Its subcellular location is the cell outer membrane. Functionally, an inverse autotransporter. Adhesin, which mediates attachment to the human intestine epithelial cells. Necessary for the production of attaching and effacing lesions on infected human tissue culture cells. Anchored to the outer membrane by binding to peptidoglycan (PGN) via its periplasmic domain, thus helping in receptor interactions during host invasion. PGN-binding may also aid in resisting mechanical and chemical stress during transit of the bacterium through the gastrointestinal tract of the host. This chain is Intimin, found in Escherichia coli O157:H7.